The chain runs to 220 residues: Polyadenylate-binding protein 2 (220 aa).

Residues 1-24 (MEEEEHEVYGGEIPDVGEMDGDME) are disordered. Residues 34–74 (AADDDAVKELDEMKKRLKEMEDEAAALREMQAKVEKEMGAQ) adopt a coiled-coil conformation. A necessary for homooligomerization region spans residues 78-219 (SIAANQAGKE…FRRPMRYMPY (142 aa)). In terms of domain architecture, RRM spans 92 to 168 (RSVFVGNVDY…RQLKVLQKRT (77 aa)). A Nuclear localization signal motif is present at residues 165–172 (QKRTNVPG).

In terms of assembly, monomer and homooligomer. Binds RNA as a monomer and oligomerizes when bound to poly(A). Forms a complex with cleavage and polyadenylation specificity factor (CPSF) subunits PAPS2, FIPS5, PABN3 and PABN1. Interacts with CSP3.

The protein resides in the nucleus speckle. The protein localises to the cytoplasm. Involved in the 3'-end formation of mRNA precursors (pre-mRNA) by the addition of a poly(A) tail of 200-250 nt to the upstream cleavage product. Stimulates poly(A) polymerase (PAPOLA) conferring processivity on the poly(A) tail elongation reaction and also controls the poly(A) tail length. Increases the affinity of poly(A) polymerase for RNA. Binds to poly(A) and to poly(G) with high affinity. May protect the poly(A) tail from degradation. The sequence is that of Polyadenylate-binding protein 2 from Arabidopsis thaliana (Mouse-ear cress).